Here is a 102-residue protein sequence, read N- to C-terminus: MQLSFSAIAILLAFAVNHATADSHQNLVCVRTYPDNNSAENLEATRCACDWLKKNGKCDDCTIWENRLCHSDAKSLDGNEFEDACVRKCPNLGATGSSIPPA.

An N-terminal signal peptide occupies residues Met-1–Ala-21. An N-linked (GlcNAc...) asparagine glycan is attached at Asn-36.

The protein localises to the secreted. Functionally, secreted effector involved in biotrophic colonization of plant cells. Participates in transition from the biotrophic to the necrotrophic phase of Magnaporthe oryzae. Elicits rice basic defense responses during the early stage of interaction and promotes cell death in the late stage of compatible interaction. In Pyricularia oryzae (strain 70-15 / ATCC MYA-4617 / FGSC 8958) (Rice blast fungus), this protein is Biotrophy-associated secreted protein 4.